Consider the following 91-residue polypeptide: Elongation factor 1-beta (91 aa).

Belongs to the EF-1-beta/EF-1-delta family.

Its function is as follows. Promotes the exchange of GDP for GTP in EF-1-alpha/GDP, thus allowing the regeneration of EF-1-alpha/GTP that could then be used to form the ternary complex EF-1-alpha/GTP/AAtRNA. This Pyrococcus horikoshii (strain ATCC 700860 / DSM 12428 / JCM 9974 / NBRC 100139 / OT-3) protein is Elongation factor 1-beta (ef1b).